The chain runs to 165 residues: Small ribosomal subunit protein uS5 (165 aa).

Residues leucine 10 to valine 73 form the S5 DRBM domain.

Belongs to the universal ribosomal protein uS5 family. Part of the 30S ribosomal subunit. Contacts proteins S4 and S8.

In terms of biological role, with S4 and S12 plays an important role in translational accuracy. Located at the back of the 30S subunit body where it stabilizes the conformation of the head with respect to the body. This chain is Small ribosomal subunit protein uS5, found in Psychrobacter sp. (strain PRwf-1).